A 356-amino-acid polypeptide reads, in one-letter code: MRLTDFSFELPESLIAHYPQAQRSACRLLSLDGPTGDLTHGTFTDLLDKLNPGDLLVFNNTRVIPARLFGRKASGGKIEVLVERMLDDHRVLAHIRASKAPKPGAELLLGDDESVNATMTARHDALFEVQFNDARPVLDILNSIGHMPLPPYIERPDEEADRELYQTVYSQKPGAVAAPTAGLHFDEPLLERLRAKGIEMAFVTLHVGAGTFQPVRVESIEDHVMHSEYAEVPQEVVDAVLAAKARGNKVVAVGTTSVRSLESAAQAAQDALIAPFFGDTQIFIYPGYQYKVIDALVTNFHLPESTLIMLVSAFAGYKHTMNAYREAVKAEYRFFSYGDAMYITYNPQAINERPGE.

Belongs to the QueA family. As to quaternary structure, monomer.

The protein localises to the cytoplasm. The catalysed reaction is 7-aminomethyl-7-carbaguanosine(34) in tRNA + S-adenosyl-L-methionine = epoxyqueuosine(34) in tRNA + adenine + L-methionine + 2 H(+). The protein operates within tRNA modification; tRNA-queuosine biosynthesis. Its function is as follows. Transfers and isomerizes the ribose moiety from AdoMet to the 7-aminomethyl group of 7-deazaguanine (preQ1-tRNA) to give epoxyqueuosine (oQ-tRNA). The protein is S-adenosylmethionine:tRNA ribosyltransferase-isomerase of Cronobacter sakazakii (strain ATCC BAA-894) (Enterobacter sakazakii).